The following is a 168-amino-acid chain: uncharacterized protein (168 aa).

Residues Met1 to Cys29 constitute a mitochondrion transit peptide. Positions Gly98 to Lys110 are enriched in basic and acidic residues. A disordered region spans residues Gly98 to Glu152. Residues Pro128–Glu152 show a composition bias toward low complexity.

It localises to the mitochondrion. This is an uncharacterized protein from Homo sapiens (Human).